We begin with the raw amino-acid sequence, 120 residues long: UPF0382 membrane protein SSP2132 (120 aa).

4 consecutive transmembrane segments (helical) span residues 3 to 23, 46 to 66, 69 to 89, and 94 to 114; these read VFII…AFGA, MYHG…SINV, VGWL…ILAL, and IIGA…LMLV.

This sequence belongs to the UPF0382 family.

It is found in the cell membrane. This is UPF0382 membrane protein SSP2132 from Staphylococcus saprophyticus subsp. saprophyticus (strain ATCC 15305 / DSM 20229 / NCIMB 8711 / NCTC 7292 / S-41).